Here is a 482-residue protein sequence, read N- to C-terminus: tRNA sulfurtransferase (482 aa).

A THUMP domain is found at 61–165 (LAIRDALTRI…DDRLLLIKGR (105 aa)). ATP contacts are provided by residues 183 to 184 (LI), Lys-265, Gly-287, and Gln-296. A disulfide bridge links Cys-344 with Cys-456. The Rhodanese domain occupies 404 to 482 (FGPNDVILDI…GFNNVKVYRP (79 aa)). The active-site Cysteine persulfide intermediate is the Cys-456.

Belongs to the ThiI family.

It is found in the cytoplasm. It carries out the reaction [ThiI sulfur-carrier protein]-S-sulfanyl-L-cysteine + a uridine in tRNA + 2 reduced [2Fe-2S]-[ferredoxin] + ATP + H(+) = [ThiI sulfur-carrier protein]-L-cysteine + a 4-thiouridine in tRNA + 2 oxidized [2Fe-2S]-[ferredoxin] + AMP + diphosphate. The catalysed reaction is [ThiS sulfur-carrier protein]-C-terminal Gly-Gly-AMP + S-sulfanyl-L-cysteinyl-[cysteine desulfurase] + AH2 = [ThiS sulfur-carrier protein]-C-terminal-Gly-aminoethanethioate + L-cysteinyl-[cysteine desulfurase] + A + AMP + 2 H(+). The protein operates within cofactor biosynthesis; thiamine diphosphate biosynthesis. In terms of biological role, catalyzes the ATP-dependent transfer of a sulfur to tRNA to produce 4-thiouridine in position 8 of tRNAs, which functions as a near-UV photosensor. Also catalyzes the transfer of sulfur to the sulfur carrier protein ThiS, forming ThiS-thiocarboxylate. This is a step in the synthesis of thiazole, in the thiamine biosynthesis pathway. The sulfur is donated as persulfide by IscS. In Escherichia fergusonii (strain ATCC 35469 / DSM 13698 / CCUG 18766 / IAM 14443 / JCM 21226 / LMG 7866 / NBRC 102419 / NCTC 12128 / CDC 0568-73), this protein is tRNA sulfurtransferase.